Consider the following 466-residue polypeptide: Muscarinic acetylcholine receptor M2 (466 aa).

Residues Met1 to Glu22 lie on the Extracellular side of the membrane. 3 N-linked (GlcNAc...) asparagine glycosylation sites follow: Asn2, Asn3, and Asn6. A helical transmembrane segment spans residues Val23–Met45. The Cytoplasmic portion of the chain corresponds to Val46–Asn59. A helical transmembrane segment spans residues Tyr60–Tyr80. At Thr81 to Asp97 the chain is on the extracellular side. An intrachain disulfide couples Cys96 to Cys176. Residues Leu98–Phe119 traverse the membrane as a helical segment. The Important for signaling signature appears at Asp120–Tyr122. The Cytoplasmic portion of the chain corresponds to Asp120–Met139. The chain crosses the membrane as a helical span at residues Ala140 to Trp162. Residues Gln163 to Ala184 lie on the Extracellular side of the membrane. The chain crosses the membrane as a helical span at residues Ala185 to Ile209. The Cytoplasmic segment spans residues Ser210–Arg387. The segment at Lys218–Ser320 is disordered. Residue Ser232 is modified to Phosphoserine. Over residues Gly254–Gly270 the composition is skewed to basic and acidic residues. Polar residues-rich tracts occupy residues Asn284–Ala293 and Asp304–Gly313. The helical transmembrane segment at Thr388–Asn410 threads the bilayer. The Extracellular portion of the chain corresponds to Thr411–Pro418. Cysteines 413 and 416 form a disulfide. A helical membrane pass occupies residues Asn419 to Leu442. An Important for signaling motif is present at residues Asn436 to Tyr440. Residues Cys443 to Arg466 lie on the Cytoplasmic side of the membrane. Phosphothreonine is present on residues Thr446, Thr450, and Thr465.

The protein belongs to the G-protein coupled receptor 1 family. Muscarinic acetylcholine receptor subfamily. CHRM2 sub-subfamily. Interacts with ARRB1 and ARRB2. Interacts with RACK1; the interaction regulates CHRM2 internalization. Phosphorylated in response to agonist treatment.

The protein resides in the cell membrane. It localises to the postsynaptic cell membrane. The muscarinic acetylcholine receptor mediates various cellular responses, including inhibition of adenylate cyclase, breakdown of phosphoinositides and modulation of potassium channels through the action of G proteins. Primary transducing effect is adenylate cyclase inhibition. Signaling promotes phospholipase C activity, leading to the release of inositol trisphosphate (IP3); this then triggers calcium ion release into the cytosol. This is Muscarinic acetylcholine receptor M2 (Chrm2) from Mus musculus (Mouse).